The sequence spans 184 residues: Peptidyl-tRNA hydrolase (184 aa).

TRNA is bound at residue Y14. H19 (proton acceptor) is an active-site residue. The tRNA site is built by F64, N66, and N112.

It belongs to the PTH family. As to quaternary structure, monomer.

The protein localises to the cytoplasm. The catalysed reaction is an N-acyl-L-alpha-aminoacyl-tRNA + H2O = an N-acyl-L-amino acid + a tRNA + H(+). Functionally, hydrolyzes ribosome-free peptidyl-tRNAs (with 1 or more amino acids incorporated), which drop off the ribosome during protein synthesis, or as a result of ribosome stalling. In terms of biological role, catalyzes the release of premature peptidyl moieties from peptidyl-tRNA molecules trapped in stalled 50S ribosomal subunits, and thus maintains levels of free tRNAs and 50S ribosomes. The protein is Peptidyl-tRNA hydrolase of Thermoanaerobacter sp. (strain X514).